Here is a 137-residue protein sequence, read N- to C-terminus: TM2 domain-containing protein DDB_G0287015 (137 aa).

Residues 9–57 (QASLVVAYLLLIFLGFFGVHRFYVGRTISGVVYLLTGGIFGIGYIVDFF) form the TM2 domain. Transmembrane regions (helical) follow at residues 12-32 (LVVAYLLLIFLGFFGVHRFYV) and 39-59 (VVYLLTGGIFGIGYIVDFFLL). A disordered region spans residues 106–137 (IQPQQQQYYQQPYQQQQYQPQPYQPNSPQYQP).

This sequence belongs to the TM2 family.

Its subcellular location is the membrane. This is TM2 domain-containing protein DDB_G0287015 from Dictyostelium discoideum (Social amoeba).